The following is a 471-amino-acid chain: P2X purinoceptor 2 (471 aa).

Residues 1 to 42 (MAAAQPKYPAGATARRLARGCWSALWDYETPKVIVVRNRRLG) are Cytoplasmic-facing. 6 cysteine pairs are disulfide-bonded: C21-C439, C125-C176, C136-C159, C142-C170, C226-C236, and C270-C279. Residues 43–63 (VLYRAVQLLILLYFVWYVFIV) form a helical membrane-spanning segment. Topologically, residues 64-337 (QKSYQESETG…IVHGQAGKFS (274 aa)) are extracellular. ATP-binding residues include K81 and K83. The N-linked (GlcNAc...) asparagine glycan is linked to N133. The N-linked (GlcNAc...) asparagine glycan is linked to N194. T196 provides a ligand contact to ATP. Positions 296, 300, and 302 each coordinate ATP. A glycan (N-linked (GlcNAc...) asparagine) is linked at N310. Residue K319 coordinates ATP. Residues 320-333 (AYGIRIDVIVHGQA) form a pore-forming motif region. The helical transmembrane segment at 338–358 (LIPTIINLATALTSVGVGSFL) threads the bilayer. Over 359–471 (CDWILLTFMN…PTDPKGLAQL (113 aa)) the chain is Cytoplasmic. The tract at residues 400–471 (GQAPPEPGHR…PTDPKGLAQL (72 aa)) is disordered.

It belongs to the P2X receptor family. As to quaternary structure, homotrimer and heterotrimer; functional P2XRs are organized as homomeric and heteromeric trimers. Homotrimer. Forms heterotrimer with P2RX1. Forms heterotrimer with P2RX6. Forms heterotrimer with P2RX3. In terms of tissue distribution, expressed in both the central and peripheral nervous system, as well as in the pituitary gland.

Its subcellular location is the cell membrane. It carries out the reaction Ca(2+)(in) = Ca(2+)(out). The enzyme catalyses K(+)(in) = K(+)(out). The catalysed reaction is Na(+)(in) = Na(+)(out). With respect to regulation, fast activation by external ATP. Exhibits slow desensitization during prolonged ATP activation. Not sensitive to the ATP agonist:alpha/beta-methylene-ATP. Its function is as follows. ATP-gated nonselective transmembrane cation channel permeable to potassium, sodium and calcium. Activation by extracellular ATP induces a variety of cellular responses, such as excitatory postsynaptic responses in sensory neurons, neuromuscular junctions (NMJ) formation, hearing, perception of taste and peristalsis. In the inner ear, regulates sound transduction and auditory neurotransmission, outer hair cell electromotility, inner ear gap junctions, and K(+) recycling. Mediates synaptic transmission between neurons and from neurons to smooth muscle. The protein is P2X purinoceptor 2 of Homo sapiens (Human).